We begin with the raw amino-acid sequence, 212 residues long: Cytidylate kinase (212 aa).

7–15 (GPAASGKGT) serves as a coordination point for ATP.

This sequence belongs to the cytidylate kinase family. Type 1 subfamily.

It localises to the cytoplasm. The enzyme catalyses CMP + ATP = CDP + ADP. It catalyses the reaction dCMP + ATP = dCDP + ADP. This chain is Cytidylate kinase, found in Bradyrhizobium diazoefficiens (strain JCM 10833 / BCRC 13528 / IAM 13628 / NBRC 14792 / USDA 110).